A 367-amino-acid chain; its full sequence is Methionine aminopeptidase 1 (367 aa).

The segment at 3 to 57 (GILCASPGCGKPAKLQCPTCVNLKLETPSHFCSQECFKTFWPLHKMYHQKGQPEN) adopts a C6H2-type zinc-finger fold. 8 residues coordinate Zn(2+): C6, C11, C19, C22, C34, C38, H46, and H50. H185 provides a ligand contact to a protein. Zn(2+)-binding residues include D202, D213, and H276. Position 283 (H283) interacts with a protein. Zn(2+) contacts are provided by E309 and E340.

Belongs to the peptidase M24A family. Methionine aminopeptidase type 1 subfamily. Associates with the 60S ribosomal subunit of the 80S translational complex. Zn(2+) serves as cofactor. Requires Co(2+) as cofactor. It depends on Mn(2+) as a cofactor. Fe(2+) is required as a cofactor.

The protein resides in the cytoplasm. It carries out the reaction Release of N-terminal amino acids, preferentially methionine, from peptides and arylamides.. Functionally, cotranslationally removes the N-terminal methionine from nascent proteins. The N-terminal methionine is often cleaved when the second residue in the primary sequence is small and uncharged (Met-Ala-, Cys, Gly, Pro, Ser, Thr, or Val). The polypeptide is Methionine aminopeptidase 1 (metap1) (Dictyostelium discoideum (Social amoeba)).